A 295-amino-acid chain; its full sequence is uncharacterized protein (295 aa).

This is an uncharacterized protein from Xanthobacter autotrophicus.